The primary structure comprises 60 residues: Temporin-MT5 (60 aa).

A signal peptide spans 1 to 22; it reads MFTLKKPLLLLFFLATINLSLC. A propeptide spans 23–44 (removed in mature form); that stretch reads EQERNAEEERRDEPDERNAEVE. Phenylalanine 58 is subject to Phenylalanine amide.

The protein belongs to the frog skin active peptide (FSAP) family. Temporin subfamily. Expressed by the skin glands.

The protein localises to the secreted. Antimicrobial peptide. This chain is Temporin-MT5, found in Amolops mantzorum (Sichuan torrent frog).